Here is a 355-residue protein sequence, read N- to C-terminus: Uroporphyrinogen decarboxylase (355 aa).

Substrate is bound by residues 27–31 (RQAGR), Asp-77, Tyr-154, Thr-209, and His-328.

The protein belongs to the uroporphyrinogen decarboxylase family. In terms of assembly, homodimer.

It localises to the cytoplasm. The enzyme catalyses uroporphyrinogen III + 4 H(+) = coproporphyrinogen III + 4 CO2. It participates in porphyrin-containing compound metabolism; protoporphyrin-IX biosynthesis; coproporphyrinogen-III from 5-aminolevulinate: step 4/4. Its function is as follows. Catalyzes the decarboxylation of four acetate groups of uroporphyrinogen-III to yield coproporphyrinogen-III. This is Uroporphyrinogen decarboxylase from Dechloromonas aromatica (strain RCB).